The primary structure comprises 475 residues: Ribulose bisphosphate carboxylase large chain (475 aa).

Positions 1 to 2 (MS) are excised as a propeptide. An N-acetylproline modification is found at Pro3. N6,N6,N6-trimethyllysine is present on Lys14. The substrate site is built by Asn123 and Thr173. Lys175 serves as the catalytic Proton acceptor. Lys177 contacts substrate. Residues Lys201, Asp203, and Glu204 each coordinate Mg(2+). At Lys201 the chain carries N6-carboxylysine. His294 serves as the catalytic Proton acceptor. The substrate site is built by Arg295, His327, and Ser379.

It belongs to the RuBisCO large chain family. Type I subfamily. Heterohexadecamer of 8 large chains and 8 small chains; disulfide-linked. The disulfide link is formed within the large subunit homodimers. Requires Mg(2+) as cofactor. In terms of processing, the disulfide bond which can form in the large chain dimeric partners within the hexadecamer appears to be associated with oxidative stress and protein turnover.

The protein localises to the plastid. It is found in the chloroplast. The enzyme catalyses 2 (2R)-3-phosphoglycerate + 2 H(+) = D-ribulose 1,5-bisphosphate + CO2 + H2O. It catalyses the reaction D-ribulose 1,5-bisphosphate + O2 = 2-phosphoglycolate + (2R)-3-phosphoglycerate + 2 H(+). RuBisCO catalyzes two reactions: the carboxylation of D-ribulose 1,5-bisphosphate, the primary event in carbon dioxide fixation, as well as the oxidative fragmentation of the pentose substrate in the photorespiration process. Both reactions occur simultaneously and in competition at the same active site. The protein is Ribulose bisphosphate carboxylase large chain of Pinus radiata (Monterey pine).